The sequence spans 606 residues: Mitogen-activated protein kinase 20 (606 aa).

Residues 25 to 316 (FKVQEVIGKG…AEEALADPYF (292 aa)) enclose the Protein kinase domain. Residues 31-39 (IGKGSYGVV) and Lys54 contribute to the ATP site. Residue Asp151 is the Proton acceptor of the active site. Position 187 is a phosphothreonine (Thr187). The TXY signature appears at 187–189 (TDY). At Tyr189 the chain carries Phosphotyrosine. Thr192 bears the Phosphothreonine mark.

This sequence belongs to the protein kinase superfamily. CMGC Ser/Thr protein kinase family. MAP kinase subfamily. In terms of processing, dually phosphorylated on Thr-187 and Tyr-189, which activates the enzyme.

It catalyses the reaction L-seryl-[protein] + ATP = O-phospho-L-seryl-[protein] + ADP + H(+). It carries out the reaction L-threonyl-[protein] + ATP = O-phospho-L-threonyl-[protein] + ADP + H(+). Its activity is regulated as follows. Activated by threonine and tyrosine phosphorylation. The sequence is that of Mitogen-activated protein kinase 20 (MPK20) from Arabidopsis thaliana (Mouse-ear cress).